The following is a 495-amino-acid chain: WD repeat-containing protein 37 (495 aa).

The disordered stretch occupies residues 1–34 (MPTESGSWAAARQTKQKRKSHSLSIKRTNSSEQD). The segment covering 22 to 31 (SLSIKRTNSS) has biased composition (polar residues). 2 WD repeats span residues 154–194 (GHRD…CLIK) and 197–236 (GHAG…PTPQ). The interval 237 to 268 (PMADTSQISGEEEVDFSDKDENDGDGDASSDC) is disordered. A compositionally biased stretch (acidic residues) spans 246–264 (GEEEVDFSDKDENDGDGDA). WD repeat units follow at residues 280–319 (SHQG…LVHS), 322–361 (GHDQ…IHSV), 366–404 (GHTD…SPIA), 407–446 (RTDS…LARL), and 453–494 (GHRR…LLQE).

The protein localises to the cytoplasm. It is found in the nucleus. The sequence is that of WD repeat-containing protein 37 (wdr37) from Xenopus laevis (African clawed frog).